A 212-amino-acid chain; its full sequence is Deoxyribose-phosphate aldolase (212 aa).

Asp89 acts as the Proton donor/acceptor in catalysis. The active-site Schiff-base intermediate with acetaldehyde is Lys151. Catalysis depends on Lys180, which acts as the Proton donor/acceptor.

Belongs to the DeoC/FbaB aldolase family. DeoC type 1 subfamily.

It localises to the cytoplasm. The catalysed reaction is 2-deoxy-D-ribose 5-phosphate = D-glyceraldehyde 3-phosphate + acetaldehyde. It functions in the pathway carbohydrate degradation; 2-deoxy-D-ribose 1-phosphate degradation; D-glyceraldehyde 3-phosphate and acetaldehyde from 2-deoxy-alpha-D-ribose 1-phosphate: step 2/2. In terms of biological role, catalyzes a reversible aldol reaction between acetaldehyde and D-glyceraldehyde 3-phosphate to generate 2-deoxy-D-ribose 5-phosphate. This is Deoxyribose-phosphate aldolase from Clostridium botulinum (strain 657 / Type Ba4).